A 596-amino-acid chain; its full sequence is V-type ATP synthase alpha chain (596 aa).

Residue 233–240 coordinates ATP; sequence GPFGAGKT.

This sequence belongs to the ATPase alpha/beta chains family.

It catalyses the reaction ATP + H2O + 4 H(+)(in) = ADP + phosphate + 5 H(+)(out). Its function is as follows. Produces ATP from ADP in the presence of a proton gradient across the membrane. The V-type alpha chain is a catalytic subunit. This chain is V-type ATP synthase alpha chain, found in Streptococcus gordonii (strain Challis / ATCC 35105 / BCRC 15272 / CH1 / DL1 / V288).